The chain runs to 198 residues: Methyl-coenzyme M reductase I operon protein C (198 aa).

As to quaternary structure, MCR is composed of three subunits: alpha, beta, and gamma. The function of proteins C and D is not known.

The sequence is that of Methyl-coenzyme M reductase I operon protein C (mcrC) from Methanothermobacter marburgensis (strain ATCC BAA-927 / DSM 2133 / JCM 14651 / NBRC 100331 / OCM 82 / Marburg) (Methanobacterium thermoautotrophicum).